A 386-amino-acid chain; its full sequence is MASSSSSSLSFSTSKKNKTFFKKPNSAFSSSRATSLIKRQQTVFKKAKELSILCDIDVCVICYGSNGELKTWPEEREKVKAIARRYGELSETKRRKGSVDLHEFLEKMNKDDPEKEEKKKIKVRRVPKVKYPVWDPRFDNYSVEQLMGLVQSLERNLTRIQHRTCAVVEAQGQRRVQYTNMANQELMMANTMNQLQQHSNQVSMYLWNHGNGAFSQIPVSALASNQTQSLAPIPPELMIYPNSDAGNYSGSLGVQGTGINGLQNMNMLTYNNINSVNDFSKQFDQNSRAESYSSLLGVHEDGNNEFENPNMSSRNNFNVQDCAGLLGMQGAGTNGLQSMNMHDYSNNNSINSNGLSHQYVQFPTYNSQHQDRVFNLDQNGNNTRSL.

Residues 29–76 (SSSRATSLIKRQQTVFKKAKELSILCDIDVCVICYGSNGELKTWPEER) form the MADS-box domain.

In terms of assembly, interacts with MEE14/CBP1.

It is found in the nucleus. In terms of biological role, probable transcription factor that may function in the maintenance of the proper function of the central cell in pollen tube attraction. The protein is Agamous-like MADS-box protein AGL103 of Arabidopsis thaliana (Mouse-ear cress).